Reading from the N-terminus, the 609-residue chain is Threonine--tRNA ligase (609 aa).

A catalytic region spans residues 215 to 506 (DHRIIGNEMK…LIEHTAGELP (292 aa)). Zn(2+) contacts are provided by cysteine 307, histidine 358, and histidine 483.

Belongs to the class-II aminoacyl-tRNA synthetase family. In terms of assembly, homodimer. Zn(2+) is required as a cofactor.

It localises to the cytoplasm. The enzyme catalyses tRNA(Thr) + L-threonine + ATP = L-threonyl-tRNA(Thr) + AMP + diphosphate + H(+). Catalyzes the attachment of threonine to tRNA(Thr) in a two-step reaction: L-threonine is first activated by ATP to form Thr-AMP and then transferred to the acceptor end of tRNA(Thr). Also edits incorrectly charged L-seryl-tRNA(Thr). This is Threonine--tRNA ligase from Campylobacter hominis (strain ATCC BAA-381 / DSM 21671 / CCUG 45161 / LMG 19568 / NCTC 13146 / CH001A).